Here is a 222-residue protein sequence, read N- to C-terminus: Exosome complex component Rrp4 (222 aa).

In terms of domain architecture, S1 motif spans 63–131 (GDLVIGRVTG…EINRVKLTLR (69 aa)).

It belongs to the RRP4 family. In terms of assembly, component of the archaeal exosome complex. Forms a trimer of Rrp4 and/or Csl4 subunits. The trimer associates with a hexameric ring-like arrangement composed of 3 Rrp41-Rrp42 heterodimers.

It is found in the cytoplasm. Non-catalytic component of the exosome, which is a complex involved in RNA degradation. Increases the RNA binding and the efficiency of RNA degradation. Confers strong poly(A) specificity to the exosome. The polypeptide is Exosome complex component Rrp4 (Methanosphaera stadtmanae (strain ATCC 43021 / DSM 3091 / JCM 11832 / MCB-3)).